The sequence spans 160 residues: 6,7-dimethyl-8-ribityllumazine synthase (160 aa).

Residues Phe23, Ser61 to Glu63, and Ala85 to Ile87 contribute to the 5-amino-6-(D-ribitylamino)uracil site. Residue Asp90–Thr91 coordinates (2S)-2-hydroxy-3-oxobutyl phosphate. His93 (proton donor) is an active-site residue. Position 118 (Phe118) interacts with 5-amino-6-(D-ribitylamino)uracil. Arg132 contributes to the (2S)-2-hydroxy-3-oxobutyl phosphate binding site.

The protein belongs to the DMRL synthase family.

The enzyme catalyses (2S)-2-hydroxy-3-oxobutyl phosphate + 5-amino-6-(D-ribitylamino)uracil = 6,7-dimethyl-8-(1-D-ribityl)lumazine + phosphate + 2 H2O + H(+). It functions in the pathway cofactor biosynthesis; riboflavin biosynthesis; riboflavin from 2-hydroxy-3-oxobutyl phosphate and 5-amino-6-(D-ribitylamino)uracil: step 1/2. Its function is as follows. Catalyzes the formation of 6,7-dimethyl-8-ribityllumazine by condensation of 5-amino-6-(D-ribitylamino)uracil with 3,4-dihydroxy-2-butanone 4-phosphate. This is the penultimate step in the biosynthesis of riboflavin. The sequence is that of 6,7-dimethyl-8-ribityllumazine synthase from Parasynechococcus marenigrum (strain WH8102).